The primary structure comprises 165 residues: ATP synthase subunit b (165 aa).

A helical transmembrane segment spans residues 5-27; the sequence is INSTTLGNIIITLGSVFLLYYLI.

The protein belongs to the ATPase B chain family. As to quaternary structure, F-type ATPases have 2 components, F(1) - the catalytic core - and F(0) - the membrane proton channel. F(1) has five subunits: alpha(3), beta(3), gamma(1), delta(1), epsilon(1). F(0) has three main subunits: a(1), b(2) and c(10-14). The alpha and beta chains form an alternating ring which encloses part of the gamma chain. F(1) is attached to F(0) by a central stalk formed by the gamma and epsilon chains, while a peripheral stalk is formed by the delta and b chains.

It is found in the cell membrane. In terms of biological role, f(1)F(0) ATP synthase produces ATP from ADP in the presence of a proton or sodium gradient. F-type ATPases consist of two structural domains, F(1) containing the extramembraneous catalytic core and F(0) containing the membrane proton channel, linked together by a central stalk and a peripheral stalk. During catalysis, ATP synthesis in the catalytic domain of F(1) is coupled via a rotary mechanism of the central stalk subunits to proton translocation. Component of the F(0) channel, it forms part of the peripheral stalk, linking F(1) to F(0). In Streptococcus thermophilus (strain CNRZ 1066), this protein is ATP synthase subunit b.